The primary structure comprises 240 residues: Probable transcriptional regulatory protein PBPRB1582 (240 aa).

Belongs to the TACO1 family.

Its subcellular location is the cytoplasm. The sequence is that of Probable transcriptional regulatory protein PBPRB1582 from Photobacterium profundum (strain SS9).